Here is a 488-residue protein sequence, read N- to C-terminus: Spermatogenesis-associated protein 6 (488 aa).

The first 17 residues, 1 to 17 (MPKVKALQCALALEIRS), serve as a signal peptide directing secretion. The segment at 176-225 (HGRLQCRTSRSQKKKSKSPERSKYCINTKNYEQPTISSKSHSPSPYTKRR) is disordered. Residues 200-220 (CINTKNYEQPTISSKSHSPSP) show a composition bias toward polar residues. S217 and S219 each carry phosphoserine. K248 is covalently cross-linked (Glycyl lysine isopeptide (Lys-Gly) (interchain with G-Cter in SUMO2)). Phosphoserine is present on residues S265, S274, S325, S343, S346, S354, S424, S465, and S487.

The protein belongs to the SPATA6 family. As to quaternary structure, interacts with MYL6. Specifically expressed in developing spermatids and mature spermatozoa (at protein level). Isoform 1 is weakly expressed in testis, ovary, thymus and placenta. Isoform 2 and isoform 3 are testis-specific. Expression isw higher in spermatids than in spermatocytes and spermatogonia.

It is found in the secreted. The protein resides in the cell projection. Its subcellular location is the cilium. The protein localises to the flagellum. Its function is as follows. Required for formation of the sperm connecting piece during spermiogenesis. Sperm connecting piece is essential for linking the developing flagellum to the head during late spermiogenesis. May be involved in myosin-based microfilament transport through interaction with myosin subunits. The protein is Spermatogenesis-associated protein 6 of Mus musculus (Mouse).